The following is a 305-amino-acid chain: Transmembrane protein 74 (305 aa).

Serine 11 is modified (phosphoserine). Residues 122-132 (QRSQRSPSAKG) show a composition bias toward polar residues. The tract at residues 122-143 (QRSQRSPSAKGSNHPVDLGWGN) is disordered. A run of 2 helical transmembrane segments spans residues 178–198 (FISAILFLVTGILLVIISYIV) and 232–252 (VIAGLCLLTLGGVVLSCLLMM).

The protein belongs to the TMEM74 family.

It localises to the lysosome membrane. The protein localises to the cytoplasmic vesicle. The protein resides in the autophagosome membrane. Functionally, plays an essential role in autophagy. TMEM74-induced autophagy may involve PI3K signal transduction. The protein is Transmembrane protein 74 (Tmem74) of Mus musculus (Mouse).